The following is a 106-amino-acid chain: Cell division topological specificity factor (106 aa).

It belongs to the MinE family.

Its function is as follows. Prevents the cell division inhibition by proteins MinC and MinD at internal division sites while permitting inhibition at polar sites. This ensures cell division at the proper site by restricting the formation of a division septum at the midpoint of the long axis of the cell. This Prochlorococcus marinus (strain SARG / CCMP1375 / SS120) protein is Cell division topological specificity factor.